Here is a 225-residue protein sequence, read N- to C-terminus: Glutathione S-transferase zeta class (225 aa).

The 82-residue stretch at Pro-10–Pro-91 folds into the GST N-terminal domain. Residues Ser-20–Arg-25, Gln-49, Val-63, Asp-75–Ser-76, Gln-115, and Asn-119–Ala-121 contribute to the glutathione site. The GST C-terminal domain occupies Asp-96–Ser-221.

This sequence belongs to the GST superfamily. Zeta family.

It is found in the cytoplasm. It catalyses the reaction RX + glutathione = an S-substituted glutathione + a halide anion + H(+). In Euphorbia esula (Leafy spurge), this protein is Glutathione S-transferase zeta class.